A 423-amino-acid chain; its full sequence is Histidine--tRNA ligase (423 aa).

It belongs to the class-II aminoacyl-tRNA synthetase family. Homodimer.

The protein resides in the cytoplasm. It carries out the reaction tRNA(His) + L-histidine + ATP = L-histidyl-tRNA(His) + AMP + diphosphate + H(+). The protein is Histidine--tRNA ligase of Moorella thermoacetica (strain ATCC 39073 / JCM 9320).